Reading from the N-terminus, the 523-residue chain is 2-isopropylmalate synthase (523 aa).

Residues 5–267 (VIIFDTTLRD…HTNINHHEIW (263 aa)) enclose the Pyruvate carboxyltransferase domain. Positions 14, 202, 204, and 238 each coordinate Mn(2+). The interval 392 to 523 (RLDYFSVQSG…QNKENNKETV (132 aa)) is regulatory domain.

Belongs to the alpha-IPM synthase/homocitrate synthase family. LeuA type 1 subfamily. Homodimer. Requires Mn(2+) as cofactor.

The protein localises to the cytoplasm. It catalyses the reaction 3-methyl-2-oxobutanoate + acetyl-CoA + H2O = (2S)-2-isopropylmalate + CoA + H(+). It functions in the pathway amino-acid biosynthesis; L-leucine biosynthesis; L-leucine from 3-methyl-2-oxobutanoate: step 1/4. Functionally, catalyzes the condensation of the acetyl group of acetyl-CoA with 3-methyl-2-oxobutanoate (2-ketoisovalerate) to form 3-carboxy-3-hydroxy-4-methylpentanoate (2-isopropylmalate). This chain is 2-isopropylmalate synthase, found in Klebsiella pneumoniae (strain 342).